Consider the following 320-residue polypeptide: L-lactate dehydrogenase (320 aa).

Residues valine 18, aspartate 39, arginine 44, tyrosine 69, and 83–84 contribute to the NAD(+) site; that span reads GA. Substrate contacts are provided by glutamine 86 and arginine 92. NAD(+) contacts are provided by residues threonine 105, 122 to 124, and serine 147; that span reads AAN. 124 to 127 is a substrate binding site; the sequence is NPVD. 152 to 155 provides a ligand contact to substrate; the sequence is DSAR. Histidine 179 acts as the Proton acceptor in catalysis. Tyrosine 223 is subject to Phosphotyrosine. Substrate is bound at residue threonine 232.

The protein belongs to the LDH/MDH superfamily. LDH family. In terms of assembly, homotetramer.

It is found in the cytoplasm. It catalyses the reaction (S)-lactate + NAD(+) = pyruvate + NADH + H(+). It functions in the pathway fermentation; pyruvate fermentation to lactate; (S)-lactate from pyruvate: step 1/1. Functionally, catalyzes the conversion of lactate to pyruvate. The protein is L-lactate dehydrogenase of Pediococcus pentosaceus (strain ATCC 25745 / CCUG 21536 / LMG 10740 / 183-1w).